The chain runs to 46 residues: MQFSDPATVLIITILAVTIAFTAVSLYTAFGPPSKQLADPFEEHED.

The helical transmembrane segment at 10 to 30 (LIITILAVTIAFTAVSLYTAF) threads the bilayer.

Belongs to the PsbN family.

The protein resides in the cellular thylakoid membrane. Its function is as follows. May play a role in photosystem I and II biogenesis. This is Protein PsbN from Acaryochloris marina (strain MBIC 11017).